The sequence spans 981 residues: Mineralocorticoid receptor (981 aa).

The segment at 1-603 (METKGYHSLP…STGSSRPSKI (603 aa)) is modulating. A compositionally biased stretch (polar residues) spans 234-258 (SLTCSPSVENRGSRSHSPTHASNVG). Disordered stretches follow at residues 234–331 (SLTC…ASTV) and 355–376 (AIQDVVPSPDTHEKGAHDVPFP). Ser250, Ser259, Ser283, Ser287, and Ser299 each carry phosphoserine. 2 stretches are compositionally biased toward low complexity: residues 259–300 (SPLS…VSSP) and 309–327 (SVSSPSNNTNNRSTLSSPT). Positions 604, 607, 621, 624, 640, 646, 656, and 659 each coordinate Zn(2+). 2 NR C4-type zinc fingers span residues 604–624 (CLVCGDEASGCHYGVVTCGSC) and 640–664 (CAGRNDCIIDKIRRKNCPACRLQKC). The segment at residues 604–669 (CLVCGDEASG…RLQKCLQAGM (66 aa)) is a DNA-binding region (nuclear receptor). A hinge region spans residues 670–722 (NLGARKSKKLGKLKGLHEEQPQQPPPPPPQSPEEGTTYIAPTKEPSVNSALVP). Positions 684–710 (GLHEEQPQQPPPPPPQSPEEGTTYIAP) are disordered. The segment covering 691–700 (QQPPPPPPQS) has biased composition (pro residues). Residues 723–961 (QLTSITHALT…EFPAMLVEII (239 aa)) enclose the NR LBD domain. The 21-hydroxyprogesterone site is built by Asn767 and Gln773. Positions 767 and 773 each coordinate aldosterone. Progesterone is bound by residues Asn767 and Gln773. Positions 779-782 (KWAK) are important for coactivator binding. The 21-hydroxyprogesterone site is built by Arg814 and Thr942. The aldosterone site is built by Arg814 and Thr942. Progesterone-binding residues include Arg814 and Thr942.

The protein belongs to the nuclear hormone receptor family. NR3 subfamily. In terms of assembly, heteromultimeric cytoplasmic complex with HSP90, HSP70, and FKBP4, in the absence of ligand. After ligand binding, it translocates to the nucleus and binds to DNA as a homodimer and as a heterodimer with NR3C1. Binds the coactivator NCOA2. May interact with HSD11B2 in the absence of ligand. Binds the coactivators NCOA1, TIF1 and NRIP1. In terms of processing, phosphorylated. As to expression, detected in liver, brain, heart, kidney, colon, aorta, hippocampus, hypothalamus and adrenal fasciculata.

It is found in the cytoplasm. The protein resides in the nucleus. Its subcellular location is the endoplasmic reticulum membrane. Functionally, receptor for both mineralocorticoids (MC) such as aldosterone and glucocorticoids (GC) such as corticosterone or cortisol. Binds to mineralocorticoid response elements (MRE) and transactivates target genes. The effect of MC is to increase ion and water transport and thus raise extracellular fluid volume and blood pressure and lower potassium levels. This chain is Mineralocorticoid receptor (Nr3c2), found in Rattus norvegicus (Rat).